The following is a 193-amino-acid chain: dCTP deaminase (193 aa).

DCTP-binding positions include 110–115 (RSSLAR), aspartate 128, 136–138 (VLE), tyrosine 171, lysine 178, and glutamine 182. The active-site Proton donor/acceptor is the glutamate 138. Residues 169–193 (RPYNRREDAKYRNQQGAVASRIDKD) are disordered.

This sequence belongs to the dCTP deaminase family. Homotrimer.

It catalyses the reaction dCTP + H2O + H(+) = dUTP + NH4(+). It functions in the pathway pyrimidine metabolism; dUMP biosynthesis; dUMP from dCTP (dUTP route): step 1/2. Its function is as follows. Catalyzes the deamination of dCTP to dUTP. The chain is dCTP deaminase from Escherichia coli O8 (strain IAI1).